Here is a 279-residue protein sequence, read N- to C-terminus: Calcium-activated potassium channel subunit beta-3 (279 aa).

Over 1-60 the chain is Cytoplasmic; sequence MDFSPSSELGFHFVAFILLTRHRTAFPASGKKRETDYSDGDPLDVHKRLPSSAGEDRAVM. The helical transmembrane segment at 61-81 threads the bilayer; the sequence is LGFAMMGFSVLMFFLLGTTIL. Residues 82-207 are Extracellular-facing; it reads KPFMLSIQRE…DVILIKKYDQ (126 aa). A glycan (N-linked (GlcNAc...) asparagine) is linked at Asn131. Residues 208–228 form a helical membrane-spanning segment; sequence MAIFHCLFWPSLTLLGGALIV. Residues 229–279 are Cytoplasmic-facing; it reads GMVRLTQHLSLLCEKYSTVVRDEVGGKVPYIEQHQFKLCIMRRSKGRAEKS.

Belongs to the KCNMB (TC 8.A.14.1) family. KCNMB3 subfamily. Interacts with KCNMA1 tetramer. There are probably 4 molecules of KCMNB3 per KCNMA1 tetramer. Post-translationally, N-glycosylated. The extracellular domain contains disulfide bond essential for the gating mechanism. In terms of tissue distribution, isoform 1, isoform 3 and isoform 4 are widely expressed. Isoform 2 is expressed placenta, pancreas, kidney and heart. Isoform 1 and isoform 3 are highly expressed in pancreas and testis.

Its subcellular location is the membrane. Functionally, regulatory subunit of the calcium activated potassium KCNMA1 (maxiK) channel. Modulates the calcium sensitivity and gating kinetics of KCNMA1, thereby contributing to KCNMA1 channel diversity. Alters the functional properties of the current expressed by the KCNMA1 channel. Isoform 2, isoform 3 and isoform 4 partially inactivate the current of KCNBMA. Isoform 4 induces a fast and incomplete inactivation of KCNMA1 channel that is detectable only at large depolarizations. In contrast, isoform 1 does not induce detectable inactivation of KCNMA1. Two or more subunits of KCNMB3 are required to block the KCNMA1 tetramer. The chain is Calcium-activated potassium channel subunit beta-3 (KCNMB3) from Homo sapiens (Human).